Consider the following 624-residue polypeptide: Alpha-galactosidase 3 (624 aa).

The N-terminal stretch at 1–22 (MSPSAAVLIPLAAAVLLRPVVG) is a signal peptide. N-linked (GlcNAc...) asparagine glycans are attached at residues Asn-37, Asn-56, Asn-197, Asn-259, and Asn-293. Asp-347 (nucleophile) is an active-site residue. Asn-393 carries N-linked (GlcNAc...) asparagine glycosylation. Asp-412 (proton donor) is an active-site residue. Asn-469 is a glycosylation site (N-linked (GlcNAc...) asparagine).

It belongs to the glycosyl hydrolase 27 family.

Its subcellular location is the secreted. The catalysed reaction is Hydrolysis of terminal, non-reducing alpha-D-galactose residues in alpha-D-galactosides, including galactose oligosaccharides, galactomannans and galactolipids.. Alpha-galactosidase involved in the degradation of simple oligosaccharides like melibiose, raffinose and stachyose, and of polymeric galacto(gluco)mannans. The chain is Alpha-galactosidase 3 (agl3) from Hypocrea jecorina (Trichoderma reesei).